A 227-amino-acid chain; its full sequence is NAD(P)H-quinone oxidoreductase subunit K, chloroplastic (227 aa).

[4Fe-4S] cluster-binding residues include Cys43, Cys44, Cys108, and Cys139.

Belongs to the complex I 20 kDa subunit family. In terms of assembly, NDH is composed of at least 16 different subunits, 5 of which are encoded in the nucleus. [4Fe-4S] cluster serves as cofactor.

Its subcellular location is the plastid. The protein resides in the chloroplast thylakoid membrane. The catalysed reaction is a plastoquinone + NADH + (n+1) H(+)(in) = a plastoquinol + NAD(+) + n H(+)(out). The enzyme catalyses a plastoquinone + NADPH + (n+1) H(+)(in) = a plastoquinol + NADP(+) + n H(+)(out). Its function is as follows. NDH shuttles electrons from NAD(P)H:plastoquinone, via FMN and iron-sulfur (Fe-S) centers, to quinones in the photosynthetic chain and possibly in a chloroplast respiratory chain. The immediate electron acceptor for the enzyme in this species is believed to be plastoquinone. Couples the redox reaction to proton translocation, and thus conserves the redox energy in a proton gradient. The polypeptide is NAD(P)H-quinone oxidoreductase subunit K, chloroplastic (Drimys granadensis).